The sequence spans 367 residues: Anthranilate phosphoribosyltransferase (367 aa).

Residues 1-17 are compositionally biased toward low complexity; the sequence is MVLSSEASSAADHSAAA. Positions 1 to 22 are disordered; the sequence is MVLSSEASSAADHSAAAPIPTS. 5-phospho-alpha-D-ribose 1-diphosphate is bound by residues G104, 107–108, T112, 114–117, 132–140, and G144; these read GD, NLST, and KHGNRAASS. Residue G104 coordinates anthranilate. S116 provides a ligand contact to Mg(2+). Residue N135 coordinates anthranilate. Anthranilate is bound at residue R190. 2 residues coordinate Mg(2+): D248 and E249.

Belongs to the anthranilate phosphoribosyltransferase family. In terms of assembly, homodimer. Mg(2+) is required as a cofactor.

It catalyses the reaction N-(5-phospho-beta-D-ribosyl)anthranilate + diphosphate = 5-phospho-alpha-D-ribose 1-diphosphate + anthranilate. The protein operates within amino-acid biosynthesis; L-tryptophan biosynthesis; L-tryptophan from chorismate: step 2/5. Its function is as follows. Catalyzes the transfer of the phosphoribosyl group of 5-phosphorylribose-1-pyrophosphate (PRPP) to anthranilate to yield N-(5'-phosphoribosyl)-anthranilate (PRA). This chain is Anthranilate phosphoribosyltransferase, found in Mycobacterium marinum (strain ATCC BAA-535 / M).